A 60-amino-acid polypeptide reads, in one-letter code: Mastoparan-B (60 aa).

An N-terminal signal peptide occupies residues 1 to 27 (MKNTILILFTAFIALLGFFGMSAEALA). 4 AXPX repeats span residues 27–30 (ADPL), 31–34 (AEPL), 35–38 (ADPN), and 41–44 (ADPE). The propeptide occupies 28-45 (DPLAEPLADPNAEADPEA). Leucine 59 is subject to Leucine amide.

This sequence belongs to the MCD family. Mastoparan subfamily. In terms of tissue distribution, expressed by the venom gland.

Its subcellular location is the secreted. The protein localises to the target cell membrane. In terms of biological role, antimicrobial and mast cell degranulating peptide. Has broad spectrum antibacterial activity against both Gram-positive (S.aureus MIC=96-128 ug/ml, S.xylosus MIC=2 ug/ml, S.alactolyticus MIC=32 ug/ml, and S.choleraesuis MIC=32 ug/ml) and Gram-negative bacteria (C.koseri MIC=6 ug/ml, E.coli MIC=3-16 ug/ml, K.pneumoniae MIC=128 ug/ml, P.aerugiosa MIC=128 ug/ml, S.typhimurium MIC=64 ug/ml, V.parahamelytics MIC=32 ug/ml, and S.enterica), as well as on fungi (C.albicans, C.glabrata, and C.neoformans). Does not show antimicrobial activity against S.mutans. Affects membrane permeability of E.coli. Also acts as a mast cell degranulating peptide, that causes liberation of histamine from rat peritoneal mast cells. Its mast cell degranulation activity may be related to the activation of G-protein coupled receptors in mast cells as well as interaction with other proteins located in cell endosomal membranes in the mast cells. Whether this peptide shows hemolytic activities is controversial, as Lin et al., 2011 and Ho et al., 1991 found a hemolytic activity on sheep, chicken and human erythrocytes, whereas Kim et al., 2016 found no hemolytic activity on human erythrocytes. In vivo, induces edema in the rat paw. In Vespa basalis (Hornet), this protein is Mastoparan-B.